Reading from the N-terminus, the 188-residue chain is MISTNDFKTGQTIKFNNNLFQIVSFLHVKPGKGAAFVRCKLKNLRTGSIIDNTFNSGIKVELAFINKNKIQFLYIDGNKYIFINIANYEQIEIEKQKIKNKIKYLYEGIIVDVVIYNDYEILDINLPEKLNLTVTKTEFIEKKDVKTNYYKDATLETGLVIKVPLFIQQGEKIIVNTQTGLYVSRCNK.

Belongs to the elongation factor P family.

The protein localises to the cytoplasm. The protein operates within protein biosynthesis; polypeptide chain elongation. Functionally, involved in peptide bond synthesis. Stimulates efficient translation and peptide-bond synthesis on native or reconstituted 70S ribosomes in vitro. Probably functions indirectly by altering the affinity of the ribosome for aminoacyl-tRNA, thus increasing their reactivity as acceptors for peptidyl transferase. This is Elongation factor P from Phytoplasma mali (strain AT).